A 421-amino-acid polypeptide reads, in one-letter code: Serine hydroxymethyltransferase (421 aa).

Residues leucine 121 and 125–127 (GHL) contribute to the (6S)-5,6,7,8-tetrahydrofolate site. An N6-(pyridoxal phosphate)lysine modification is found at lysine 229.

This sequence belongs to the SHMT family. In terms of assembly, homodimer. Requires pyridoxal 5'-phosphate as cofactor.

Its subcellular location is the cytoplasm. It carries out the reaction (6R)-5,10-methylene-5,6,7,8-tetrahydrofolate + glycine + H2O = (6S)-5,6,7,8-tetrahydrofolate + L-serine. Its pathway is one-carbon metabolism; tetrahydrofolate interconversion. It participates in amino-acid biosynthesis; glycine biosynthesis; glycine from L-serine: step 1/1. Catalyzes the reversible interconversion of serine and glycine with tetrahydrofolate (THF) serving as the one-carbon carrier. This reaction serves as the major source of one-carbon groups required for the biosynthesis of purines, thymidylate, methionine, and other important biomolecules. Also exhibits THF-independent aldolase activity toward beta-hydroxyamino acids, producing glycine and aldehydes, via a retro-aldol mechanism. The chain is Serine hydroxymethyltransferase from Haemophilus influenzae (strain PittEE).